Here is a 477-residue protein sequence, read N- to C-terminus: Sucrose-6-phosphate hydrolase (477 aa).

Substrate contacts are provided by residues 36–39 (WMND), Q55, W63, 98–99 (FS), 160–161 (RD), E215, and W298. Residue D39 is part of the active site.

Belongs to the glycosyl hydrolase 32 family.

The protein localises to the cytoplasm. The catalysed reaction is Hydrolysis of terminal non-reducing beta-D-fructofuranoside residues in beta-D-fructofuranosides.. It participates in glycan biosynthesis; sucrose metabolism. Its function is as follows. Enables the bacterium to metabolize sucrose as a sole carbon source. This chain is Sucrose-6-phosphate hydrolase (cscA), found in Escherichia coli.